The following is a 436-amino-acid chain: Xylose isomerase (436 aa).

Mg(2+) is bound by residues D306 and D308.

The protein belongs to the xylose isomerase family. As to quaternary structure, homotetramer. It depends on Mg(2+) as a cofactor.

The protein resides in the cytoplasm. It catalyses the reaction alpha-D-xylose = alpha-D-xylulofuranose. The polypeptide is Xylose isomerase (Rhizobium rhizogenes (strain K84 / ATCC BAA-868) (Agrobacterium radiobacter)).